We begin with the raw amino-acid sequence, 1037 residues long: Cysteine-rich motor neuron 1 protein (1037 aa).

An N-terminal signal peptide occupies residues 1 to 34 (MYLVAGGRGLAGCGHLSVSLLGLLLLLARSGTRA). Positions 35–112 (LVCLPCDESK…EYEVGVCEDE (78 aa)) constitute an IGFBP N-terminal domain. Residues 35 to 940 (LVCLPCDESK…HPGEDSSLDS (906 aa)) lie on the Extracellular side of the membrane. 6 disulfides stabilise this stretch: C37–C60, C40–C62, C45–C63, C51–C66, C74–C90, and C84–C109. The Cell attachment site motif lies at 314–316 (RGD). N330 carries N-linked (GlcNAc...) asparagine glycosylation. 2 consecutive VWFC domains span residues 334–391 (PACV…PVCE) and 401–457 (AGCY…PVCE). 4 Antistasin-like domains span residues 469–498 (CGEL…TCQC), 505–532 (CLGL…LCQC), 539–564 (CRPT…ICRC), and 567–592 (CPEL…ICKC). VWFC domains are found at residues 606 to 663 (GTCL…PSCT), 677 to 735 (SICH…PQCT), 751 to 809 (SYCR…PYCL), and 817 to 874 (VVCH…PMCP). A helical membrane pass occupies residues 941-961 (IVSVVVPIIICLSIIIAFLLI). The Cytoplasmic segment spans residues 962–1037 (NQKKQWVPLL…LQADNFYQTV (76 aa)). T1036 is subject to Phosphothreonine.

In terms of assembly, interacts with BMP4 and BMP7. In terms of tissue distribution, expressed during embryonic development in brain, kidney, spinal cord, testis, lens, vibrissae, pinna, tooth primordia and in specific regions of the CNS. Expressed in adult lens. Displays male-specific expression in the fetal gonads with the strongest expression in the Sertoli cells of developing testis.

Its subcellular location is the membrane. Its function is as follows. May play a role in CNS development by interacting with growth factors implicated in motor neuron differentiation and survival. May play a role in capillary formation and maintenance during angiogenesis. Modulates BMP activity by affecting its processing and delivery to the cell surface. The chain is Cysteine-rich motor neuron 1 protein (Crim1) from Mus musculus (Mouse).